Reading from the N-terminus, the 293-residue chain is Ribosomal protein L11 methyltransferase (293 aa).

Residues threonine 145, glycine 166, aspartate 188, and asparagine 230 each contribute to the S-adenosyl-L-methionine site.

Belongs to the methyltransferase superfamily. PrmA family.

The protein resides in the cytoplasm. It catalyses the reaction L-lysyl-[protein] + 3 S-adenosyl-L-methionine = N(6),N(6),N(6)-trimethyl-L-lysyl-[protein] + 3 S-adenosyl-L-homocysteine + 3 H(+). In terms of biological role, methylates ribosomal protein L11. This Salmonella dublin (strain CT_02021853) protein is Ribosomal protein L11 methyltransferase.